We begin with the raw amino-acid sequence, 360 residues long: MNLLDLDRQALKRLFADLGEKPFRATQVLKWVHQRRVTGFEEMTDISKALRARLAERVALRLPEVLAEQVSEDGTRKWLLRVDGGQAIETVFIPDSGRGTLCVSSQVGCALDCSFCSTAQQGFNRNLSTAEIIGQYYVAYDQLTGTGEQITNVVFMGMGEPLLNLEAVIPAVRLMTDDDAYGLSKRKVTISTSGVVTMLERMREQTDVSLAVSLHAPNNALRDELVPINRKHPLERLIPACAAYIADKPHRRITWEYVMLDGVNDQDHHAHELARLLGDIPSKVNLIPFNPFPGARYRCSPRGRILRFVRILQSHGLTATTRVTRGQDIDGACGQLVGKVQDRTRRQQRLVQRELRREGR.

Residue E89 is the Proton acceptor of the active site. The region spanning 95–330 (DSGRGTLCVS…TRVTRGQDID (236 aa)) is the Radical SAM core domain. An intrachain disulfide couples C102 to C333. C109, C113, and C116 together coordinate [4Fe-4S] cluster. S-adenosyl-L-methionine-binding positions include 159-160 (GE), S191, 213-215 (SLH), and N290. The S-methylcysteine intermediate role is filled by C333.

Belongs to the radical SAM superfamily. RlmN family. [4Fe-4S] cluster is required as a cofactor.

It is found in the cytoplasm. The catalysed reaction is adenosine(2503) in 23S rRNA + 2 reduced [2Fe-2S]-[ferredoxin] + 2 S-adenosyl-L-methionine = 2-methyladenosine(2503) in 23S rRNA + 5'-deoxyadenosine + L-methionine + 2 oxidized [2Fe-2S]-[ferredoxin] + S-adenosyl-L-homocysteine. It carries out the reaction adenosine(37) in tRNA + 2 reduced [2Fe-2S]-[ferredoxin] + 2 S-adenosyl-L-methionine = 2-methyladenosine(37) in tRNA + 5'-deoxyadenosine + L-methionine + 2 oxidized [2Fe-2S]-[ferredoxin] + S-adenosyl-L-homocysteine. Specifically methylates position 2 of adenine 2503 in 23S rRNA and position 2 of adenine 37 in tRNAs. m2A2503 modification seems to play a crucial role in the proofreading step occurring at the peptidyl transferase center and thus would serve to optimize ribosomal fidelity. In Alkalilimnicola ehrlichii (strain ATCC BAA-1101 / DSM 17681 / MLHE-1), this protein is Dual-specificity RNA methyltransferase RlmN.